The following is a 1117-amino-acid chain: DNA polymerase II large subunit (1117 aa).

A compositionally biased stretch (basic and acidic residues) spans 279 to 294 (STKEEEKKKEESSENK). The disordered stretch occupies residues 279–299 (STKEEEKKKEESSENKPKKKA).

It belongs to the archaeal DNA polymerase II family. In terms of assembly, heterodimer of a large subunit and a small subunit.

The enzyme catalyses DNA(n) + a 2'-deoxyribonucleoside 5'-triphosphate = DNA(n+1) + diphosphate. It carries out the reaction Exonucleolytic cleavage in the 3'- to 5'-direction to yield nucleoside 5'-phosphates.. Possesses two activities: a DNA synthesis (polymerase) and an exonucleolytic activity that degrades single-stranded DNA in the 3'- to 5'-direction. Has a template-primer preference which is characteristic of a replicative DNA polymerase. The chain is DNA polymerase II large subunit from Methanosphaera stadtmanae (strain ATCC 43021 / DSM 3091 / JCM 11832 / MCB-3).